A 987-amino-acid polypeptide reads, in one-letter code: MMWGMPNIKLKFIYLCILLFVFMASMLNSVSGLKTIFYDDFENWSGWYNYSSGAVEQSSNYAHSGIYSLRKFLNDDPNGGYKLIGKEIGRDIVMEGWIYRPLPYVSGRWDRIGIEDENFNGYSIRIEHDYNKIAIETRENGIAVNTLVITNWNPPENQWYYFKFYIYSNGTLRLEVYYENGSLGATVSAIDNIYTKFDRVVVHGGQDYYVDDLRISDLYPPLRVRYIEEYNATATVDGTGKTNYSYGLTGHIIIENTAPYKEDTLNDVWVAVDIKNNASGLRLVYNGTPKGVFIESSAPAYTNLPNANTYIHIPILPNNSYVEYEFDIDASQTLPILVNETYDVTKIPANKMSEWTVNLIVYLNKNLVPNGENVNVNVIKYLSNGQFYDNFENWTGWNQYKNGIVQWSSIQSHSGNYSLEKYGISTSLNNDPNGGYKLLPKEIGRDVVISGWVYRPSNWGGGPIDRIGLEDENFDGYSFEVNHYSNYISIDRRTNGNPTEISPEVYWNPPEDEWYYFELKIYSNGTITFSTYYQNGSLAATVSTIDNTYTKFDRVVIHGGYVYYVDDLEVNSKNFDFYGDKNWKYLEITSANSSEGTAVLFDGDYFKKDYNTSNLNAINWTNITLNWSNDSATLVFNVLGNYSYSERDNILAKYGFAKILFNYNGTNTNTSIKGVYASGSYSISTDHGTTGEINIWIENVTFKNDAKSYSFNLTNLNIWAVNKSAYELYWNPFNKSIWIDGSNYTITPNIDIPPGEVWNSKTYNFTFSGVPIVWANCSFTLSKKDYILLNEVSQIGSSYVVVEEIYVVGSYLIKVTKHIVPDADGTYDIYIVVENIGSVKTPEYVYVYDLIPKNFTVSDEWVNQSSMLIAEGNHTITTNPRYNLSMWWALHAIYPGADGDGNWNDTAEILANKTVVIHYKLNGTGEFYPSDAFIVGIDPTNSLLPTTSPKITTVAGTVENNFEIFLILINVIFGLGILTKRNIRNNK.

Transmembrane regions (helical) follow at residues 12 to 32 (FIYL…SVSG) and 958 to 978 (VENN…LGIL).

The protein to M.jannaschii MJ1393 and A.fulgidus AF2028.

The protein localises to the cell membrane. This is an uncharacterized protein from Methanocaldococcus jannaschii (strain ATCC 43067 / DSM 2661 / JAL-1 / JCM 10045 / NBRC 100440) (Methanococcus jannaschii).